The sequence spans 432 residues: D-amino acid dehydrogenase 1 (432 aa).

3 to 17 (VLVLGSGVIGTASAY) is an FAD binding site. The interval 410-432 (GLDISRYSNSPENAKNAHPAPAH) is disordered.

This sequence belongs to the DadA oxidoreductase family. It depends on FAD as a cofactor.

It carries out the reaction a D-alpha-amino acid + A + H2O = a 2-oxocarboxylate + AH2 + NH4(+). Its pathway is amino-acid degradation; D-alanine degradation; NH(3) and pyruvate from D-alanine: step 1/1. In terms of biological role, catalyzes the oxidative deamination of D-amino acids. Has very broad substrate specificity; all the D-amino acids tested can be used as the substrate except D-Glu and D-Gln. Participates in the utilization of several D-amino acids as the sole source of nitrogen, i.e. D-alanine, D-histidine, D-phenylalanine, D-serine, D-threonine, and D-valine. The protein is D-amino acid dehydrogenase 1 (dadA1) of Pseudomonas aeruginosa (strain ATCC 15692 / DSM 22644 / CIP 104116 / JCM 14847 / LMG 12228 / 1C / PRS 101 / PAO1).